The chain runs to 1833 residues: Protein TIC 214 (1833 aa).

The next 6 membrane-spanning stretches (helical) occupy residues 18 to 38, 67 to 87, 90 to 110, 127 to 147, 175 to 195, and 218 to 238; these read IINS…FSIG, FIMG…HLAL, PHTI…WNNH, LSIQ…YFIL, VGWL…LVWI, and IFSI…PSPI. Residues 254-301 form a disordered region; the sequence is EETNLEIEKTSETKETKQEEEGFTEEDPSPSLFSEEKEDPDKIDETEK. Composition is skewed to basic and acidic residues over residues 259-273 and 292-301; these read EIEK…KQEE and DPDKIDETEK.

The protein belongs to the TIC214 family. As to quaternary structure, part of the Tic complex.

Its subcellular location is the plastid. The protein resides in the chloroplast inner membrane. Functionally, involved in protein precursor import into chloroplasts. May be part of an intermediate translocation complex acting as a protein-conducting channel at the inner envelope. The polypeptide is Protein TIC 214 (Spinacia oleracea (Spinach)).